A 156-amino-acid polypeptide reads, in one-letter code: Dynein 16 kDa light chain, flagellar outer arm (156 aa).

The Thioredoxin domain maps to 2–116 (AAGLPPVQYS…LNQQVLSLTP (115 aa)). The cysteines at positions 37 and 40 are disulfide-linked.

As to quaternary structure, consists of at least 3 heavy chains (alpha, beta and gamma), 2 intermediate chains and 8 light chains.

It localises to the cell projection. The protein resides in the cilium. The protein localises to the flagellum. Its subcellular location is the cytoplasm. It is found in the cytoskeleton. It localises to the flagellum axoneme. May be involved in regulating the redox state of functionally important thiol groups within dynein. The chain is Dynein 16 kDa light chain, flagellar outer arm from Chlamydomonas reinhardtii (Chlamydomonas smithii).